A 236-amino-acid chain; its full sequence is MVKKAIVTAMAVISLFTLMGCNNRAEVDTLSPAQAAELKPMPQSWRGVLPCADCEGIETSLFLEKDGTWVMNERYLGAREEPSSFASYGTWARTADKLVLTDSKGEKSYYRAKGDALEMLDREGNPIESQFNYTLEAAQSSLPMTPMTLRGMYFYMADAATFTDCATGKRFMVANNAELERSYLAARGHSEKPVLLSVEGHFTLEGNPDTGAPTKVLAPDTAGKFYPNQDCSSLGQ.

The signal sequence occupies residues 1–20; that stretch reads MVKKAIVTAMAVISLFTLMG. C21 carries N-palmitoyl cysteine lipidation. C21 carries S-diacylglycerol cysteine lipidation. Residues 21–100 form an N-terminal domain region; it reads CNNRAEVDTL…WARTADKLVL (80 aa). Topologically, residues 21-236 are periplasmic; sequence CNNRAEVDTL…PNQDCSSLGQ (216 aa). Residues 51-54 carry the CXXC motif; it reads CADC. The C-terminal domain stretch occupies residues 126–236; sequence PIESQFNYTL…PNQDCSSLGQ (111 aa). The tract at residues 144–156 is could contain a copper-binding motif; the sequence is MTPMTLRGMYFYM. C165 and C231 are oxidised to a cystine.

Probably exists as a monomer in vivo, can however form homodimers which swap domains. In terms of processing, palmitoylated. Seems to only form a disulfide bond between Cys-165 and Cys-231. The 2 other cysteine residues may however be chemically active.

The protein localises to the cell outer membrane. In terms of biological role, involved in copper homeostasis, could be involved in both copper efflux and the delivery of copper to copper-dependent enzymes. Required for efficient binding of stationary phase cells to hydrophobic surfaces, part of the process of biofilm formation. Functions during envelope stress responses; when overproduced induces degP through the activation of the two-component envelope stress response system CpxA/CpxR. DegP induction seems to require membrane anchoring of this protein. Structural changes and/or interaction of the CXXC motif with its environment may lead to activation of the Cpx stress response. The chain is Lipoprotein NlpE from Escherichia coli (strain K12).